The primary structure comprises 494 residues: Aspartyl/glutamyl-tRNA(Asn/Gln) amidotransferase subunit B (494 aa).

It belongs to the GatB/GatE family. GatB subfamily. Heterotrimer of A, B and C subunits.

It carries out the reaction L-glutamyl-tRNA(Gln) + L-glutamine + ATP + H2O = L-glutaminyl-tRNA(Gln) + L-glutamate + ADP + phosphate + H(+). The catalysed reaction is L-aspartyl-tRNA(Asn) + L-glutamine + ATP + H2O = L-asparaginyl-tRNA(Asn) + L-glutamate + ADP + phosphate + 2 H(+). Its function is as follows. Allows the formation of correctly charged Asn-tRNA(Asn) or Gln-tRNA(Gln) through the transamidation of misacylated Asp-tRNA(Asn) or Glu-tRNA(Gln) in organisms which lack either or both of asparaginyl-tRNA or glutaminyl-tRNA synthetases. The reaction takes place in the presence of glutamine and ATP through an activated phospho-Asp-tRNA(Asn) or phospho-Glu-tRNA(Gln). In Rhodopseudomonas palustris (strain BisB18), this protein is Aspartyl/glutamyl-tRNA(Asn/Gln) amidotransferase subunit B.